Reading from the N-terminus, the 274-residue chain is NH(3)-dependent NAD(+) synthetase (274 aa).

Residue 46 to 53 (GISGGQDS) participates in ATP binding. Mg(2+) is bound at residue D52. R140 is a binding site for deamido-NAD(+). T160 contributes to the ATP binding site. A Mg(2+)-binding site is contributed by E165. Deamido-NAD(+) is bound by residues K173 and D180. ATP is bound by residues K189 and T211. 260-261 (HK) is a binding site for deamido-NAD(+).

Belongs to the NAD synthetase family. In terms of assembly, homodimer.

The enzyme catalyses deamido-NAD(+) + NH4(+) + ATP = AMP + diphosphate + NAD(+) + H(+). It functions in the pathway cofactor biosynthesis; NAD(+) biosynthesis; NAD(+) from deamido-NAD(+) (ammonia route): step 1/1. Catalyzes the ATP-dependent amidation of deamido-NAD to form NAD. Uses ammonia as a nitrogen source. This Streptococcus uberis (strain ATCC BAA-854 / 0140J) protein is NH(3)-dependent NAD(+) synthetase.